A 317-amino-acid polypeptide reads, in one-letter code: Glycine--tRNA ligase alpha subunit (317 aa).

Belongs to the class-II aminoacyl-tRNA synthetase family. Tetramer of two alpha and two beta subunits.

It localises to the cytoplasm. It carries out the reaction tRNA(Gly) + glycine + ATP = glycyl-tRNA(Gly) + AMP + diphosphate. This is Glycine--tRNA ligase alpha subunit from Cupriavidus metallidurans (strain ATCC 43123 / DSM 2839 / NBRC 102507 / CH34) (Ralstonia metallidurans).